We begin with the raw amino-acid sequence, 727 residues long: Synaptic vesicle glycoprotein 2C (727 aa).

Positions 1–57 (MEDSYKDRTSLMKGAKDIAKEVKKQTVKKVNQAVDRAQDEYTQRSYSRFQDEDDDDD) are interaction with SYT1. Residues 1–154 (MEDSYKDRTS…CGHGRFQWAL (154 aa)) lie on the Cytoplasmic side of the membrane. Positions 22 to 120 (VKKQTVKKVN…QPKGDEYKDR (99 aa)) are disordered. Phosphoserine is present on residues Ser-75 and Ser-76. Thr-79 carries the phosphothreonine modification. A helical membrane pass occupies residues 155 to 175 (FFVLGMALMADGVEVFVVGFV). Residues 176 to 191 (LPSAETDLCIPNSGSG) lie on the Extracellular side of the membrane. A helical transmembrane segment spans residues 192 to 212 (WLGSIVYLGMMVGAFFWGGLA). Residues 213–226 (DKVGRKQSLLICMS) are Cytoplasmic-facing. The helical transmembrane segment at 227 to 247 (VNGFFAFLSSFVQGYGFFLLC) threads the bilayer. Arg-248 is a topological domain (extracellular). Residues 249–269 (LLSGFGIGGAIPTVFSYFAEV) form a helical membrane-spanning segment. The Cytoplasmic segment spans residues 270 to 280 (LAREKRGEHLS). A helical transmembrane segment spans residues 281 to 301 (WLCMFWMIGGIYASAMAWAII). Topologically, residues 302-320 (PHYGWSFSMGSAYQFHSWR) are extracellular. The helical transmembrane segment at 321–341 (VFVIVCALPCVSSVVALTFMP) threads the bilayer. Topologically, residues 342–437 (ESPRFLLEVG…PVRENTIKLT (96 aa)) are cytoplasmic. A helical membrane pass occupies residues 438-458 (IVWFTLSFGYYGLSVWFPDVI). Residues 459 to 578 (KHLQSDEYAL…CQITFDDDYS (120 aa)) lie on the Extracellular side of the membrane. The residue at position 466 (Tyr-466) is a Phosphotyrosine. 5 N-linked (GlcNAc...) asparagine glycosylation sites follow: Asn-480, Asn-484, Asn-534, Asn-559, and Asn-565. Residues 529 to 566 (NTYFKNCTFIDTLFENTDFEPYKFIDSEFQNCSFLHNK) form a (Microbial infection) C.botulinum neurotoxin type A-binding region. The chain crosses the membrane as a helical span at residues 579-599 (AYWIYFVNFLGTLAVLPGNIV). At 600–609 (SALLMDRIGR) the chain is on the cytoplasmic side. The chain crosses the membrane as a helical span at residues 610–630 (LTMLGGSMVLSGISCFFLWFG). Topologically, residues 631-636 (TSESMM) are extracellular. Residues 637 to 657 (IGMLCLYNGLTISAWNSLDVV) form a helical membrane-spanning segment. Residues 658-670 (TVELYPTDRRATG) lie on the Cytoplasmic side of the membrane. A helical transmembrane segment spans residues 671-693 (FGFLNALCKAAAVLGNLIFGSLV). The Extracellular segment spans residues 694–697 (SITK). The helical transmembrane segment at 698–716 (AIPILLASTVLVCGGLVGL) threads the bilayer. Over 717 to 727 (RLPDTRTQVLM) the chain is Cytoplasmic.

It belongs to the major facilitator superfamily. Interacts with SYT1 in a calcium-dependent manner. In terms of assembly, (Microbial infection) Interacts with C.botulinum neurotoxin type A (BoNT/A, botA). As to quaternary structure, (Microbial infection) Interacts with C.botulinum neurotoxin type F (BoNT/F). Interaction requires glycosylation of SV2 proteins. N-glycosylated. As to expression, expressed at high levels in very few brain areas including the striatum, midbrain and hindbrain, and in the olfactory bulb. Expressed at lower levels in cerebrum, hippocampus and cerebellum (at protein level). Mainly expressed in brain; also detected in lung, liver, kidney.

It is found in the cytoplasmic vesicle. The protein resides in the secretory vesicle. It localises to the synaptic vesicle membrane. Plays a role in the control of regulated secretion in neural and endocrine cells, enhancing selectively low-frequency neurotransmission. Positively regulates vesicle fusion by maintaining the readily releasable pool of secretory vesicles. Its function is as follows. (Microbial infection) Receptor for C.botulinum neurotoxin type A (BoNT/A, botA); the toxin binds Sv2c via extracellular loop 4. Restores uptake of BoNT/A in rat cells that are deleted for SV2 receptor. In terms of biological role, (Microbial infection) Possible receptor for C.botulinum neurotoxin type D (BoNT/D, botD); BoNT/D does not bind to extracellular loop 4 as do BoNT/A and BoNT/E. Another group does not find a convincing interaction with SV2. Functionally, (Microbial infection) Receptor for C.botulinum neurotoxin type F (BoNT/F); binding requires glycosylation of Asn-573. This is Synaptic vesicle glycoprotein 2C (Sv2c) from Rattus norvegicus (Rat).